A 414-amino-acid chain; its full sequence is Dimethylsulfoniopropionate lyase DddY (414 aa).

An N-terminal signal peptide occupies residues 1–18; sequence MKYMVLFSGLLFSNVLVA.

The protein belongs to the DMSP lyase DddY family.

It is found in the periplasm. The enzyme catalyses S,S-dimethyl-beta-propiothetin = acrylate + dimethyl sulfide + H(+). Functionally, catalyzes the cleavage of dimethylsulfoniopropionate (DMSP) into dimethyl sulfide (DMS) and acrylate. This is Dimethylsulfoniopropionate lyase DddY from Shewanella woodyi (strain ATCC 51908 / MS32).